The chain runs to 931 residues: G patch domain-containing protein 1 (931 aa).

Disordered stretches follow at residues 1–41 (MAAR…TVRD), 73–92 (PSTF…LGPE), and 169–209 (QGVG…EDDD). N-acetylalanine is present on Ala2. Ser6 and Ser8 each carry phosphoserine. The region spanning 152 to 198 (KLSVGFELLRKMGWKEGQGVGPRVKRRPRRQKPDPGVKIYGCALPPG) is the G-patch domain. Lys312 participates in a covalent cross-link: Glycyl lysine isopeptide (Lys-Gly) (interchain with G-Cter in SUMO2). 2 positions are modified to phosphoserine: Ser357 and Ser477. 2 disordered regions span residues 568–595 (RFTH…GDKQ) and 659–931 (LPTT…LRRQ). A compositionally biased stretch (basic and acidic residues) spans 582 to 593 (EVPRDQENDVGD). Polar residues predominate over residues 659–668 (LPTTQASSEK). Over residues 669–695 (VSQHRGPDKSRKPSRWDTSKHEKKEDS) the composition is skewed to basic and acidic residues. The residue at position 715 (Ser715) is a Phosphoserine. The span at 769–780 (SEDEQGDSEDDQ) shows a compositional bias: acidic residues. Polar residues predominate over residues 786 to 802 (ANFQSSQDTDLGETSSV). The segment covering 852 to 888 (EKHKKNKDKHKAKKEHRRKKEKKKKHRKHKHKGKQKN) has biased composition (basic residues). Over residues 896 to 905 (SSESSDSSDS) the composition is skewed to low complexity. Residues 922–931 (RLKSLPLRRQ) show a composition bias toward basic residues.

The protein belongs to the GPATCH1 family.

The chain is G patch domain-containing protein 1 (GPATCH1) from Homo sapiens (Human).